We begin with the raw amino-acid sequence, 379 residues long: Bifunctional enzyme IspD/IspF (379 aa).

The 2-C-methyl-D-erythritol 4-phosphate cytidylyltransferase stretch occupies residues 1–223 (MTVAVIIVAA…RERKGLTMDV (223 aa)). Residues 224–379 (RLGNGYDVHA…SIATVTLIGA (156 aa)) are 2-C-methyl-D-erythritol 2,4-cyclodiphosphate synthase. The a divalent metal cation site is built by aspartate 230 and histidine 232. Residues 230–232 (DVH) and 256–257 (HS) each bind 4-CDP-2-C-methyl-D-erythritol 2-phosphate. Histidine 264 serves as a coordination point for a divalent metal cation. Residues 278-280 (DIG), 354-357 (TTSE), phenylalanine 361, and arginine 364 each bind 4-CDP-2-C-methyl-D-erythritol 2-phosphate.

This sequence in the N-terminal section; belongs to the IspD/TarI cytidylyltransferase family. IspD subfamily. It in the C-terminal section; belongs to the IspF family. The cofactor is a divalent metal cation.

The enzyme catalyses 2-C-methyl-D-erythritol 4-phosphate + CTP + H(+) = 4-CDP-2-C-methyl-D-erythritol + diphosphate. It catalyses the reaction 4-CDP-2-C-methyl-D-erythritol 2-phosphate = 2-C-methyl-D-erythritol 2,4-cyclic diphosphate + CMP. The protein operates within isoprenoid biosynthesis; isopentenyl diphosphate biosynthesis via DXP pathway; isopentenyl diphosphate from 1-deoxy-D-xylulose 5-phosphate: step 2/6. It participates in isoprenoid biosynthesis; isopentenyl diphosphate biosynthesis via DXP pathway; isopentenyl diphosphate from 1-deoxy-D-xylulose 5-phosphate: step 4/6. Functionally, bifunctional enzyme that catalyzes the formation of 4-diphosphocytidyl-2-C-methyl-D-erythritol from CTP and 2-C-methyl-D-erythritol 4-phosphate (MEP) (IspD), and catalyzes the conversion of 4-diphosphocytidyl-2-C-methyl-D-erythritol 2-phosphate (CDP-ME2P) to 2-C-methyl-D-erythritol 2,4-cyclodiphosphate (ME-CPP) with a corresponding release of cytidine 5-monophosphate (CMP) (IspF). This is Bifunctional enzyme IspD/IspF from Rhodobacter capsulatus (strain ATCC BAA-309 / NBRC 16581 / SB1003).